A 99-amino-acid chain; its full sequence is Osteocalcin (99 aa).

Residues Met-1–Ala-23 form the signal peptide. Residues Lys-24–Arg-49 constitute a propeptide that is removed on maturation. The Gla domain maps to Tyr-50–Gly-96. Position 58 is a hydroxyproline (Pro-58). Positions 66, 70, 73, and 79 each coordinate Ca(2+). 4-carboxyglutamate is present on residues Glu-66, Glu-70, and Glu-73. An intrachain disulfide couples Cys-72 to Cys-78.

This sequence belongs to the osteocalcin/matrix Gla protein family. Post-translationally, gamma-carboxyglutamate residues are formed by vitamin K dependent carboxylation by GGCX. These residues are essential for the binding of calcium. Decarboxylation promotes the hormone activity.

The protein localises to the secreted. The carboxylated form is one of the main organic components of the bone matrix, which constitutes 1-2% of the total bone protein: it acts as a negative regulator of bone formation and is required to limit bone formation without impairing bone resorption or mineralization. The carboxylated form binds strongly to apatite and calcium. Its function is as follows. The uncarboxylated form acts as a hormone secreted by osteoblasts, which regulates different cellular processes, such as energy metabolism, male fertility and brain development. Regulates of energy metabolism by acting as a hormone favoring pancreatic beta-cell proliferation, insulin secretion and sensitivity and energy expenditure. Uncarboxylated osteocalcin hormone also promotes testosterone production in the testes: acts as a ligand for G protein-coupled receptor GPRC6A at the surface of Leydig cells, initiating a signaling response that promotes the expression of enzymes required for testosterone synthesis in a CREB-dependent manner. Also acts as a regulator of brain development: osteocalcin hormone crosses the blood-brain barrier and acts as a ligand for GPR158 on neurons, initiating a signaling response that prevents neuronal apoptosis in the hippocampus, favors the synthesis of all monoamine neurotransmitters and inhibits that of gamma-aminobutyric acid (GABA). Osteocalcin also crosses the placenta during pregnancy and maternal osteocalcin is required for fetal brain development. This chain is Osteocalcin (Bglap), found in Rattus norvegicus (Rat).